Reading from the N-terminus, the 517-residue chain is ATP synthase subunit beta (517 aa).

2 stretches are compositionally biased toward low complexity: residues 1–22 (MAKA…AAKA) and 29–42 (AKTA…APKA). The interval 1-42 (MAKAATPKTTAAAEAKPAAAKAPAKKAPAKTAAAKSDAAPKA) is disordered. 195-202 (GGAGVGKT) serves as a coordination point for ATP.

It belongs to the ATPase alpha/beta chains family. As to quaternary structure, F-type ATPases have 2 components, CF(1) - the catalytic core - and CF(0) - the membrane proton channel. CF(1) has five subunits: alpha(3), beta(3), gamma(1), delta(1), epsilon(1). CF(0) has three main subunits: a(1), b(2) and c(9-12). The alpha and beta chains form an alternating ring which encloses part of the gamma chain. CF(1) is attached to CF(0) by a central stalk formed by the gamma and epsilon chains, while a peripheral stalk is formed by the delta and b chains.

Its subcellular location is the cell inner membrane. The catalysed reaction is ATP + H2O + 4 H(+)(in) = ADP + phosphate + 5 H(+)(out). Produces ATP from ADP in the presence of a proton gradient across the membrane. The catalytic sites are hosted primarily by the beta subunits. The sequence is that of ATP synthase subunit beta from Brucella anthropi (strain ATCC 49188 / DSM 6882 / CCUG 24695 / JCM 21032 / LMG 3331 / NBRC 15819 / NCTC 12168 / Alc 37) (Ochrobactrum anthropi).